The sequence spans 89 residues: Small ribosomal subunit protein uS15 (89 aa).

Belongs to the universal ribosomal protein uS15 family. In terms of assembly, part of the 30S ribosomal subunit. Forms a bridge to the 50S subunit in the 70S ribosome, contacting the 23S rRNA.

One of the primary rRNA binding proteins, it binds directly to 16S rRNA where it helps nucleate assembly of the platform of the 30S subunit by binding and bridging several RNA helices of the 16S rRNA. Its function is as follows. Forms an intersubunit bridge (bridge B4) with the 23S rRNA of the 50S subunit in the ribosome. The chain is Small ribosomal subunit protein uS15 from Photorhabdus laumondii subsp. laumondii (strain DSM 15139 / CIP 105565 / TT01) (Photorhabdus luminescens subsp. laumondii).